Reading from the N-terminus, the 355-residue chain is dTDP-D-glucose 4,6-dehydratase (355 aa).

Thr-142 provides a ligand contact to substrate. Residue Asp-143 is the Proton donor of the active site. Residues Glu-144 and Tyr-166 each act as proton acceptor in the active site.

Belongs to the NAD(P)-dependent epimerase/dehydratase family. dTDP-glucose dehydratase subfamily. The cofactor is NAD(+).

The enzyme catalyses dTDP-alpha-D-glucose = dTDP-4-dehydro-6-deoxy-alpha-D-glucose + H2O. This chain is dTDP-D-glucose 4,6-dehydratase (TGDS), found in Bos taurus (Bovine).